A 243-amino-acid polypeptide reads, in one-letter code: Hydroxyacylglutathione hydrolase (243 aa).

Histidine 59, histidine 61, aspartate 63, histidine 64, histidine 117, aspartate 135, and histidine 173 together coordinate Zn(2+).

It belongs to the metallo-beta-lactamase superfamily. Glyoxalase II family. As to quaternary structure, monomer. It depends on Zn(2+) as a cofactor.

It carries out the reaction an S-(2-hydroxyacyl)glutathione + H2O = a 2-hydroxy carboxylate + glutathione + H(+). Its pathway is secondary metabolite metabolism; methylglyoxal degradation; (R)-lactate from methylglyoxal: step 2/2. Functionally, thiolesterase that catalyzes the hydrolysis of S-D-lactoyl-glutathione to form glutathione and D-lactic acid. The chain is Hydroxyacylglutathione hydrolase from Acidiphilium cryptum (strain JF-5).